A 93-amino-acid chain; its full sequence is MKTLLLTLVVVTIVCLDLGYTLLCYKTPSPINAETCPPGENLCYTKMWCDAWCSSRGKVIELGCAATCPSKKPYEEVDCCSTDNCNPHPKLRP.

An N-terminal signal peptide occupies residues 1-21 (MKTLLLTLVVVTIVCLDLGYT). Intrachain disulfides connect cysteine 24/cysteine 43, cysteine 36/cysteine 64, cysteine 49/cysteine 53, cysteine 68/cysteine 79, and cysteine 80/cysteine 85.

This sequence belongs to the three-finger toxin family. Long-chain subfamily. Type II alpha-neurotoxin sub-subfamily. As to expression, expressed by the venom gland.

The protein resides in the secreted. Its function is as follows. Binds with high affinity to muscular (alpha-1/CHRNA1) and neuronal (alpha-7/CHRNA7) nicotinic acetylcholine receptor (nAChR) and inhibits acetylcholine from binding to the receptor, thereby impairing neuromuscular and neuronal transmission. This Ophiophagus hannah (King cobra) protein is Alpha-elapitoxin-Oh2a.